The chain runs to 330 residues: Aspartate--ammonia ligase (330 aa).

It belongs to the class-II aminoacyl-tRNA synthetase family. AsnA subfamily.

The protein localises to the cytoplasm. It carries out the reaction L-aspartate + NH4(+) + ATP = L-asparagine + AMP + diphosphate + H(+). The protein operates within amino-acid biosynthesis; L-asparagine biosynthesis; L-asparagine from L-aspartate (ammonia route): step 1/1. The protein is Aspartate--ammonia ligase of Streptococcus pyogenes serotype M3 (strain ATCC BAA-595 / MGAS315).